Here is a 294-residue protein sequence, read N- to C-terminus: 4-hydroxy-tetrahydrodipicolinate synthase (294 aa).

Residue threonine 44 participates in pyruvate binding. The Proton donor/acceptor role is filled by tyrosine 132. Lysine 161 serves as the catalytic Schiff-base intermediate with substrate. Residue isoleucine 206 participates in pyruvate binding.

Belongs to the DapA family. Homotetramer; dimer of dimers.

The protein localises to the cytoplasm. The enzyme catalyses L-aspartate 4-semialdehyde + pyruvate = (2S,4S)-4-hydroxy-2,3,4,5-tetrahydrodipicolinate + H2O + H(+). Its pathway is amino-acid biosynthesis; L-lysine biosynthesis via DAP pathway; (S)-tetrahydrodipicolinate from L-aspartate: step 3/4. With respect to regulation, is not inhibited by (S)-lysine, in contrast to E.coli DapA. In terms of biological role, catalyzes the condensation of (S)-aspartate-beta-semialdehyde [(S)-ASA] and pyruvate to 4-hydroxy-tetrahydrodipicolinate (HTPA). This chain is 4-hydroxy-tetrahydrodipicolinate synthase, found in Thermotoga maritima (strain ATCC 43589 / DSM 3109 / JCM 10099 / NBRC 100826 / MSB8).